A 319-amino-acid chain; its full sequence is Protein sprouty homolog 1 (319 aa).

N-acetylmethionine is present on Met-1. The interval 54–157 is disordered; sequence TEGPSVVKRP…HRSERAIRTQ (104 aa). The segment covering 69 to 79 has biased composition (basic and acidic residues); the sequence is PRQEKHERTHE. Low complexity predominate over residues 112–131; the sequence is SRSTSTGSAASSGSNSSASS. One can recognise an SPR domain in the interval 183–295; that stretch reads QCGKCKCGEC…CYDWIHRPGC (113 aa).

This sequence belongs to the sprouty family. Forms heterodimers with SPRY2. Interacts with TESK1. Interacts with CAV1 (via C-terminus).

It is found in the cytoplasm. The protein localises to the membrane. Functionally, inhibits fibroblast growth factor (FGF)-induced retinal lens fiber differentiation, probably by inhibiting FGF-mediated phosphorylation of ERK1/2. Inhibits TGFB-induced epithelial-to-mesenchymal transition in lens epithelial cells. This chain is Protein sprouty homolog 1 (SPRY1), found in Bos taurus (Bovine).